A 472-amino-acid chain; its full sequence is Selenium-binding protein 2 (472 aa).

Phosphoserine is present on S467.

It belongs to the selenium-binding protein family. The N-terminus is blocked. Mainly expressed in liver.

The protein localises to the nucleus. The protein resides in the cytoplasm. It localises to the cytosol. It is found in the membrane. Functionally, selenium- and acetaminophen-binding protein which may be involved in the sensing of reactive xenobiotics in the cytoplasm. May be involved in intra-Golgi protein transport. This is Selenium-binding protein 2 (Selenbp2) from Mus musculus (Mouse).